The chain runs to 336 residues: tRNA N6-adenosine threonylcarbamoyltransferase (336 aa).

2 residues coordinate Fe cation: histidine 111 and histidine 115. Substrate-binding positions include 134-138 (LVSGG), aspartate 167, glycine 180, and asparagine 270. Fe cation is bound at residue aspartate 298.

The protein belongs to the KAE1 / TsaD family. Requires Fe(2+) as cofactor.

Its subcellular location is the cytoplasm. The enzyme catalyses L-threonylcarbamoyladenylate + adenosine(37) in tRNA = N(6)-L-threonylcarbamoyladenosine(37) in tRNA + AMP + H(+). Its function is as follows. Required for the formation of a threonylcarbamoyl group on adenosine at position 37 (t(6)A37) in tRNAs that read codons beginning with adenine. Is involved in the transfer of the threonylcarbamoyl moiety of threonylcarbamoyl-AMP (TC-AMP) to the N6 group of A37, together with TsaE and TsaB. TsaD likely plays a direct catalytic role in this reaction. The chain is tRNA N6-adenosine threonylcarbamoyltransferase from Acinetobacter baumannii (strain AB307-0294).